We begin with the raw amino-acid sequence, 975 residues long: Monofunctional C1-tetrahydrofolate synthase, mitochondrial (975 aa).

The transit peptide at 1–30 (MSARLPFVLRRLARPQHPGSPRRLPSLCRA) directs the protein to the mitochondrion. The interval 13–45 (ARPQHPGSPRRLPSLCRASSGRGSGCGGGEGLL) is disordered. Positions 31–345 (SSGRGSGCGG…REQQHRRWRL (315 aa)) are methylenetetrahydrofolate dehydrogenase and cyclohydrolase. Gly residues predominate over residues 34 to 44 (RGSGCGGGEGL). Position 187 is an N6-acetyllysine; alternate (lysine 187). Position 187 is an N6-succinyllysine; alternate (lysine 187). The interval 346–975 (HCLKLQPLSP…TETEQVKGLF (630 aa)) is formyltetrahydrofolate synthetase. Serine 354 is modified (phosphoserine). Position 420–427 (420–427 (TPLGEGKS)) interacts with ATP. Lysine 593 carries the N6-succinyllysine modification.

In the N-terminal section; belongs to the tetrahydrofolate dehydrogenase/cyclohydrolase family. It in the C-terminal section; belongs to the formate--tetrahydrofolate ligase family. Homodimer.

Its subcellular location is the mitochondrion. The catalysed reaction is (6S)-5,6,7,8-tetrahydrofolate + formate + ATP = (6R)-10-formyltetrahydrofolate + ADP + phosphate. Its pathway is one-carbon metabolism; tetrahydrofolate interconversion. Its function is as follows. May provide the missing metabolic reaction required to link the mitochondria and the cytoplasm in the mammalian model of one-carbon folate metabolism complementing thus the enzymatic activities of MTHFD2. This is Monofunctional C1-tetrahydrofolate synthase, mitochondrial (MTHFD1L) from Bos taurus (Bovine).